The following is a 560-amino-acid chain: DNA ligase B (560 aa).

The active-site N6-AMP-lysine intermediate is Lys124.

Belongs to the NAD-dependent DNA ligase family. LigB subfamily.

The catalysed reaction is NAD(+) + (deoxyribonucleotide)n-3'-hydroxyl + 5'-phospho-(deoxyribonucleotide)m = (deoxyribonucleotide)n+m + AMP + beta-nicotinamide D-nucleotide.. Functionally, catalyzes the formation of phosphodiester linkages between 5'-phosphoryl and 3'-hydroxyl groups in double-stranded DNA using NAD as a coenzyme and as the energy source for the reaction. This chain is DNA ligase B, found in Shigella flexneri serotype 5b (strain 8401).